A 370-amino-acid polypeptide reads, in one-letter code: Putative F-box protein At3g10430 (370 aa).

One can recognise an F-box domain in the interval 1–47 (MGSSLPFDLILEILQRTPAESLLRFKSTCKKWYELISNDKRFMYKHL).

This Arabidopsis thaliana (Mouse-ear cress) protein is Putative F-box protein At3g10430.